The sequence spans 306 residues: Aspartate carbamoyltransferase catalytic subunit (306 aa).

The carbamoyl phosphate site is built by R55 and T56. K84 is a binding site for L-aspartate. Carbamoyl phosphate contacts are provided by R105, H133, and Q136. L-aspartate is bound by residues R166 and R227. The carbamoyl phosphate site is built by L265 and P266.

The protein belongs to the aspartate/ornithine carbamoyltransferase superfamily. ATCase family. As to quaternary structure, heterododecamer (2C3:3R2) of six catalytic PyrB chains organized as two trimers (C3), and six regulatory PyrI chains organized as three dimers (R2).

The catalysed reaction is carbamoyl phosphate + L-aspartate = N-carbamoyl-L-aspartate + phosphate + H(+). The protein operates within pyrimidine metabolism; UMP biosynthesis via de novo pathway; (S)-dihydroorotate from bicarbonate: step 2/3. In terms of biological role, catalyzes the condensation of carbamoyl phosphate and aspartate to form carbamoyl aspartate and inorganic phosphate, the committed step in the de novo pyrimidine nucleotide biosynthesis pathway. In Neisseria meningitidis serogroup A / serotype 4A (strain DSM 15465 / Z2491), this protein is Aspartate carbamoyltransferase catalytic subunit.